The chain runs to 288 residues: Xyloglucan endotransglucosylase protein 8 (288 aa).

Positions 1–25 are cleaved as a signal peptide; sequence MAASPYSIFAVQLLLLASWMLSSSS. The region spanning 26 to 215 is the GH16 domain; sequence SNFNQDFNIA…WTQAPFTTSY (190 aa). E102 (nucleophile) is an active-site residue. E106 serves as the catalytic Proton donor. Position 106 (E106) interacts with xyloglucan. N110 is a glycosylation site (N-linked (GlcNAc...) asparagine). Residues 119–121, 129–131, 194–195, and G199 each bind xyloglucan; these read HTN, ERE, and EW. Disulfide bonds link C224–C233 and C268–C282. R273 is a xyloglucan binding site.

Belongs to the glycosyl hydrolase 16 family. XTH group 2 subfamily. Post-translationally, contains at least one intrachain disulfide bond essential for its enzymatic activity. In terms of tissue distribution, highly expressed in mature fruits. Very low expression in leaves, flowers, calyces and stems.

Its subcellular location is the secreted. The protein resides in the cell wall. The protein localises to the extracellular space. It localises to the apoplast. The catalysed reaction is breaks a beta-(1-&gt;4) bond in the backbone of a xyloglucan and transfers the xyloglucanyl segment on to O-4 of the non-reducing terminal glucose residue of an acceptor, which can be a xyloglucan or an oligosaccharide of xyloglucan.. Its function is as follows. Catalyzes xyloglucan endotransglycosylation (XET). Cleaves and religates xyloglucan polymers. Does not catalyze xyloglucan endohydrolysis (XEH). Overexpression in Arabidopsis transgenic plants causes accelerated dark-induced leaf senescence and higher lipid peroxidation of the leaf cells. Overexpression in transgenic tomato plants promotes fruit ripening and softening. Probably involved in cell wall restructuring during postharvest fruit softening. This chain is Xyloglucan endotransglucosylase protein 8, found in Diospyros kaki (Kaki persimmon).